Reading from the N-terminus, the 194-residue chain is HTH-type transcriptional regulator BetI (194 aa).

An HTH tetR-type domain is found at 8–68 (EIRRAQLIDA…ATMRHVLRDL (61 aa)). A DNA-binding region (H-T-H motif) is located at residues 31 to 50 (TLASVAQRANISTGIVSHYF).

The protein operates within amine and polyamine biosynthesis; betaine biosynthesis via choline pathway [regulation]. Its function is as follows. Repressor involved in the biosynthesis of the osmoprotectant glycine betaine. It represses transcription of the choline transporter BetT and the genes of BetAB involved in the synthesis of glycine betaine. The protein is HTH-type transcriptional regulator BetI of Burkholderia cenocepacia (strain HI2424).